Reading from the N-terminus, the 800-residue chain is MVPLCLLLYLATLVFPPVYSAHLLSPEPTDWVSSEVEVFLEDYVAGVGDTVVLSCTPQDFLLPIVWQKDGDAVSSSNRTRVGQKALRIINVSYEDSGVYSCRHAHKSMLLSNYTVKVIDSLSSGDDEDYDEDEDEAGNGNAEAPYWTRSDRMEKKLLAVPAANTVKFRCPAAGNPTPSIHWLKNGKEFKGEQRMGGIKLRHQQWSLVMESAVPSDRGNYTCVVQNKYGSIKHTYQLDVLERSPHRPILQAGLPANQTVVVGSDVEFHCKVYSDAQPHIQWLKHIEVNGSQYGPNGAPYVNVLKTAGINTTDKELEILYLTNVSFEDAGQYTCLAGNSIGYNHHSAWLTVLPAVEMEREDDYADILIYVTSCVLFILTMVIIILCRMWINTQKTLPAPPVQKLSKFPLKRQVSLESNSSMNSNTPLVRIARLSSSDGPMLPNVSELELPSDPKWEFTRTKLTLGKPLGEGCFGQVVMAEAIGIDKEKPNKPLTVAVKMLKDDGTDKDLSDLVSEMEMMKMIGKHKNIINLLGACTQDGPLYVLVEYASKGNLREYLRARRPPGMDYSFDTCKIPNETLTFKDLVSCAYQVARGMEYLASKKCIHRDPAARNVLVTEDNVMKIADFGLARDVHNIDYYKKTTNGRLPVKWMAPEALFDRVYTHQSDVWSYGVLLWEIFTLGGSPYPGIPVEELFKLLKEGHRMDKPANCTHELYMIMRECWHAVPSQRPTFRQLVEDHDRVLSMTSTDEYLDLSVPFEQYSPTCPDSNSTCSSGDDSVFAHDPLPEEPCLPKHHHSNGVIRT.

A signal peptide spans 1-20 (MVPLCLLLYLATLVFPPVYS). The region spanning 21 to 122 (AHLLSPEPTD…YTVKVIDSLS (102 aa)) is the Ig-like C2-type 1 domain. At 21-363 (AHLLSPEPTD…EMEREDDYAD (343 aa)) the chain is on the extracellular side. An intrachain disulfide couples Cys-55 to Cys-101. N-linked (GlcNAc...) asparagine glycans are attached at residues Asn-77, Asn-90, and Asn-112. Residues 124 to 136 (GDDEDYDEDEDEA) show a composition bias toward acidic residues. The disordered stretch occupies residues 124 to 143 (GDDEDYDEDEDEAGNGNAEA). Ig-like C2-type domains are found at residues 144 to 237 (PYWT…YQLD) and 246 to 348 (PILQ…AWLT). Cys-169 and Cys-221 are oxidised to a cystine. Residues Asn-218, Asn-255, Asn-287, Asn-308, and Asn-321 are each glycosylated (N-linked (GlcNAc...) asparagine). Cys-268 and Cys-332 are joined by a disulfide. Residues 364–384 (ILIYVTSCVLFILTMVIIILC) form a helical membrane-spanning segment. The Cytoplasmic portion of the chain corresponds to 385 to 800 (RMWINTQKTL…HHHSNGVIRT (416 aa)). Residues 460–739 (LTLGKPLGEG…RQLVEDHDRV (280 aa)) enclose the Protein kinase domain. Residues 466-474 (LGEGCFGQV) and Lys-496 contribute to the ATP site. Asp-605 serves as the catalytic Proton acceptor. Phosphotyrosine; by autocatalysis is present on residues Tyr-635, Tyr-636, Tyr-712, and Tyr-748. Positions 764 to 773 (DSNSTCSSGD) are enriched in polar residues. Residues 764–800 (DSNSTCSSGDDSVFAHDPLPEEPCLPKHHHSNGVIRT) form a disordered region.

Belongs to the protein kinase superfamily. Tyr protein kinase family. Fibroblast growth factor receptor subfamily. In terms of assembly, monomer. Homodimer after ligand binding. In terms of processing, autophosphorylated. Binding of FGF family members together with heparan sulfate proteoglycan or heparin promotes receptor dimerization and autophosphorylation on tyrosine residues. Autophosphorylation occurs in trans between the two FGFR molecules present in the dimer.

The protein resides in the cell membrane. The enzyme catalyses L-tyrosyl-[protein] + ATP = O-phospho-L-tyrosyl-[protein] + ADP + H(+). Present in an inactive conformation in the absence of bound ligand. Ligand binding leads to dimerization and activation by autophosphorylation on tyrosine residues. Its function is as follows. Tyrosine-protein kinase that acts as a cell-surface receptor for fibroblast growth factors and plays an essential role in the regulation of cell proliferation, differentiation and apoptosis. Plays an essential role in the regulation of chondrocyte differentiation, proliferation and apoptosis, and is required for normal skeleton development. Regulates both osteogenesis and postnatal bone mineralization by osteoblasts. Promotes apoptosis in chondrocytes, but can also promote cancer cell proliferation. Phosphorylates PLCG1, CBL and FRS2. Ligand binding leads to the activation of several signaling cascades. Activation of PLCG1 leads to the production of the cellular signaling molecules diacylglycerol and inositol 1,4,5-trisphosphate. Phosphorylation of FRS2 triggers recruitment of GRB2, GAB1, PIK3R1 and SOS1, and mediates activation of RAS, MAPK1/ERK2, MAPK3/ERK1 and the MAP kinase signaling pathway, as well as of the AKT1 signaling pathway. This chain is Fibroblast growth factor receptor 3 (fgfr3), found in Danio rerio (Zebrafish).